A 252-amino-acid chain; its full sequence is Hydroxyacylglutathione hydrolase (252 aa).

His54, His56, Asp58, His59, His113, Asp132, and His170 together coordinate Zn(2+).

The protein belongs to the metallo-beta-lactamase superfamily. Glyoxalase II family. As to quaternary structure, monomer. The cofactor is Zn(2+).

The catalysed reaction is an S-(2-hydroxyacyl)glutathione + H2O = a 2-hydroxy carboxylate + glutathione + H(+). It participates in secondary metabolite metabolism; methylglyoxal degradation; (R)-lactate from methylglyoxal: step 2/2. In terms of biological role, thiolesterase that catalyzes the hydrolysis of S-D-lactoyl-glutathione to form glutathione and D-lactic acid. In Synechococcus sp. (strain JA-3-3Ab) (Cyanobacteria bacterium Yellowstone A-Prime), this protein is Hydroxyacylglutathione hydrolase.